A 211-amino-acid polypeptide reads, in one-letter code: Dual specificity phosphatase 29 (211 aa).

The 146-residue stretch at 47–192 folds into the Tyrosine-protein phosphatase domain; the sequence is HVNEVWPGIY…LRTLDIQLAI (146 aa). Position 136 to 143 (136 to 143) interacts with substrate; it reads HCAMGRSR. Cys137 serves as the catalytic Phosphocysteine intermediate.

The protein belongs to the protein-tyrosine phosphatase family. Non-receptor class dual specificity subfamily.

It is found in the cytoplasm. It localises to the nucleus. The enzyme catalyses O-phospho-L-tyrosyl-[protein] + H2O = L-tyrosyl-[protein] + phosphate. It catalyses the reaction O-phospho-L-seryl-[protein] + H2O = L-seryl-[protein] + phosphate. The catalysed reaction is O-phospho-L-threonyl-[protein] + H2O = L-threonyl-[protein] + phosphate. In terms of biological role, dual specificity phosphatase able to dephosphorylate phosphotyrosine, phosphoserine and phosphothreonine residues within the same substrate, with a preference for phosphotyrosine as a substrate. Involved in the modulation of AMPK and MAPK1/2 signaling pathways. The protein is Dual specificity phosphatase 29 (dusp29) of Callorhinchus milii (Ghost shark).